The following is a 650-amino-acid chain: Transcription factor LHW (650 aa).

Disordered stretches follow at residues 381-417 (LTKV…SSVY) and 431-470 (LKRE…DRQM). Positions 384-397 (VSNSSVTTPSHSSP) are enriched in low complexity. Residues 451 to 458 (NRKRLKPG) carry the Nuclear localization signal motif. One can recognise a bHLH domain in the interval 455-504 (LKPGENPRPRPKDRQMIQDRVKELREIIPNGAKCSIDALLERTIKHMLFL). The segment covering 456–470 (KPGENPRPRPKDRQM) has biased composition (basic and acidic residues).

The protein belongs to the bHLH protein family. LHW subfamily. Homodimer. Can also interact with bHLH proteins. As to expression, expressed in both root and shoot meristems. Present in root tips.

It is found in the nucleus. Functionally, transcription activator that regulates root development; promotes the production of stele cells in roots. Coordinately controls the number of all vascular cell types by regulating the size of the pool of cells from which they arise. The chain is Transcription factor LHW (LHW) from Arabidopsis thaliana (Mouse-ear cress).